The chain runs to 116 residues: Protein Rev (116 aa).

A phosphoserine; by host CK2 mark is found at Ser5 and Ser8. Residues 18 to 26 (LIKFLYQSN) form a homomultimerization region. Positions 23–48 (YQSNPPPSPEGTRQARRNRRRRWRAR) are disordered. A Nuclear localization signal and RNA-binding (RRE) motif is present at residues 34–50 (TRQARRNRRRRWRARQR). The segment covering 36-48 (QARRNRRRRWRAR) has biased composition (basic residues). Positions 73 to 84 (LQLPPLERLNLN) match the Nuclear export signal and binding to XPO1 motif. The interval 90–116 (GTSGTQGVGSPQIPVEPPAVLESGTEE) is disordered. Residues Ser92 and Ser99 each carry the phosphoserine; by host modification.

Belongs to the HIV-1 REV protein family. As to quaternary structure, homomultimer; when bound to the RRE. Multimeric assembly is essential for activity and may involve XPO1. Binds to human KPNB1, XPO1, TNPO1, RANBP5 and IPO7. Interacts with the viral Integrase. Interacts with human KHDRBS1. Interacts with human NAP1; this interaction decreases Rev multimerization and stimulates its activity. Interacts with human DEAD-box helicases DDX3 and DDX24; these interactions may serve for viral RNA export to the cytoplasm and packaging, respectively. Interacts with human PSIP1; this interaction may inhibit HIV-1 DNA integration by promoting dissociation of the Integrase-LEDGF/p75 complex. In terms of processing, asymmetrically arginine dimethylated at one site by host PRMT6. Methylation impairs the RNA-binding activity and export of viral RNA from the nucleus to the cytoplasm. Phosphorylated by protein kinase CK2. Presence of, and maybe binding to the N-terminus of the regulatory beta subunit of CK2 is necessary for CK2-mediated Rev's phosphorylation.

The protein localises to the host nucleus. It localises to the host nucleolus. It is found in the host cytoplasm. Its function is as follows. Escorts unspliced or incompletely spliced viral pre-mRNAs (late transcripts) out of the nucleus of infected cells. These pre-mRNAs carry a recognition sequence called Rev responsive element (RRE) located in the env gene, that is not present in fully spliced viral mRNAs (early transcripts). This function is essential since most viral proteins are translated from unspliced or partially spliced pre-mRNAs which cannot exit the nucleus by the pathway used by fully processed cellular mRNAs. Rev itself is translated from a fully spliced mRNA that readily exits the nucleus. Rev's nuclear localization signal (NLS) binds directly to KPNB1/Importin beta-1 without previous binding to KPNA1/Importin alpha-1. KPNB1 binds to the GDP bound form of RAN (Ran-GDP) and targets Rev to the nucleus. In the nucleus, the conversion from Ran-GDP to Ran-GTP dissociates Rev from KPNB1 and allows Rev's binding to the RRE in viral pre-mRNAs. Rev multimerization on the RRE via cooperative assembly exposes its nuclear export signal (NES) to the surface. Rev can then form a complex with XPO1/CRM1 and Ran-GTP, leading to nuclear export of the complex. Conversion from Ran-GTP to Ran-GDP mediates dissociation of the Rev/RRE/XPO1/RAN complex, so that Rev can return to the nucleus for a subsequent round of export. Beside KPNB1, also seems to interact with TNPO1/Transportin-1, RANBP5/IPO5 and IPO7/RANBP7 for nuclear import. The nucleoporin-like HRB/RIP is an essential cofactor that probably indirectly interacts with Rev to release HIV RNAs from the perinuclear region to the cytoplasm. The sequence is that of Protein Rev from Homo sapiens (Human).